Reading from the N-terminus, the 318-residue chain is Pyrimidine-specific ribonucleoside hydrolase RihA (318 aa).

Residue His240 is part of the active site.

This sequence belongs to the IUNH family. RihA subfamily.

Hydrolyzes cytidine or uridine to ribose and cytosine or uracil, respectively. This chain is Pyrimidine-specific ribonucleoside hydrolase RihA, found in Shewanella baltica (strain OS185).